The chain runs to 258 residues: Ribosomal RNA small subunit methyltransferase J (258 aa).

Residues Arg111–Asp112, Glu127–Arg128, and Asp179 each bind S-adenosyl-L-methionine.

This sequence belongs to the methyltransferase superfamily. RsmJ family.

Its subcellular location is the cytoplasm. It carries out the reaction guanosine(1516) in 16S rRNA + S-adenosyl-L-methionine = N(2)-methylguanosine(1516) in 16S rRNA + S-adenosyl-L-homocysteine + H(+). Its function is as follows. Specifically methylates the guanosine in position 1516 of 16S rRNA. This chain is Ribosomal RNA small subunit methyltransferase J, found in Alteromonas mediterranea (strain DSM 17117 / CIP 110805 / LMG 28347 / Deep ecotype).